We begin with the raw amino-acid sequence, 92 residues long: Cell division topological specificity factor (92 aa).

Belongs to the MinE family.

In terms of biological role, prevents the cell division inhibition by proteins MinC and MinD at internal division sites while permitting inhibition at polar sites. This ensures cell division at the proper site by restricting the formation of a division septum at the midpoint of the long axis of the cell. This chain is Cell division topological specificity factor, found in Colwellia psychrerythraea (strain 34H / ATCC BAA-681) (Vibrio psychroerythus).